Consider the following 113-residue polypeptide: Large ribosomal subunit protein P2B (113 aa).

The disordered stretch occupies residues proline 66 to aspartate 113. Residues glutamate 89–glutamate 99 show a composition bias toward basic and acidic residues.

It belongs to the eukaryotic ribosomal protein P1/P2 family. In terms of assembly, P1 and P2 exist as dimers at the large ribosomal subunit. In terms of processing, phosphorylated.

In terms of biological role, plays an important role in the elongation step of protein synthesis. In Zea mays (Maize), this protein is Large ribosomal subunit protein P2B (RPP2B).